We begin with the raw amino-acid sequence, 241 residues long: Ion-translocating oxidoreductase complex subunit E (241 aa).

Helical transmembrane passes span 22-42 (LLGL…IGLG), 69-89 (IPIY…VIKA), 91-111 (AFNL…NCIV), 124-144 (VLVS…TMFL), 157-177 (LFFG…IEVL), and 182-202 (VFLL…VLAG).

This sequence belongs to the NqrDE/RnfAE family. In terms of assembly, the complex is composed of six subunits: RnfA, RnfB, RnfC, RnfD, RnfE and RnfG.

Its subcellular location is the cell inner membrane. Functionally, part of a membrane-bound complex that couples electron transfer with translocation of ions across the membrane. The sequence is that of Ion-translocating oxidoreductase complex subunit E from Buchnera aphidicola subsp. Baizongia pistaciae (strain Bp).